The sequence spans 365 residues: Histidinol-phosphate aminotransferase (365 aa).

K220 carries the N6-(pyridoxal phosphate)lysine modification.

The protein belongs to the class-II pyridoxal-phosphate-dependent aminotransferase family. Histidinol-phosphate aminotransferase subfamily. In terms of assembly, homodimer. It depends on pyridoxal 5'-phosphate as a cofactor.

It carries out the reaction L-histidinol phosphate + 2-oxoglutarate = 3-(imidazol-4-yl)-2-oxopropyl phosphate + L-glutamate. The protein operates within amino-acid biosynthesis; L-histidine biosynthesis; L-histidine from 5-phospho-alpha-D-ribose 1-diphosphate: step 7/9. The sequence is that of Histidinol-phosphate aminotransferase (hisC) from Xylella fastidiosa (strain Temecula1 / ATCC 700964).